A 55-amino-acid chain; its full sequence is Accessory gland-specific peptide 70A (55 aa).

An N-terminal signal peptide occupies residues 1 to 19; the sequence is MKTLALFLVLVCVLGLVQS. The tract at residues 20–33 is essential for binding to sperm; that stretch reads WEWPWNRKPTKFPI. Hydroxyproline occurs at positions 28 and 32. Position 33 is an isoleucine derivative (I33). A hydroxyproline mark is found at P34, P36, and P38. A sufficient to induce PMR region spans residues 36 to 55; the sequence is PNPRDKWCRLNLGPAWGGRC. A disulfide bridge links C43 with C55.

It belongs to the Drosophila sex peptide family. Sperm-bound protein is cleaved to release an active C-terminal peptide. Gradual release from stored sperm may function to prolong PMR and enhance male reproductive success. As to expression, main cells of the accessory glands of males (paragonial gland).

Its subcellular location is the secreted. Functionally, male seminal protein which triggers short- and long-term post-mating behavioral responses (PMR) in female Drosophila. Binds initially to sperm where it is later cleaved to release an active peptide within the female reproductive tract. Signals via the sex peptide receptor (SPR) in female flies; may also act via other receptors. Moderates the activity of distinct neuronal circuitries in the female genital tract to promote specific PMRs including: enhanced ovulation, increased egg laying rate, increased feeding/foraging rate, induced antimicrobial peptide synthesis, reduced mating receptivity, reduced day-time sleep and reduced lifespan in multiple mated females. This is Accessory gland-specific peptide 70A (SP) from Drosophila melanogaster (Fruit fly).